The sequence spans 60 residues: Metallothionein B (60 aa).

Residues 1-28 form a beta region; that stretch reads MDPCECSKSGTCNCGGSCTCTNCSCTSC. Cysteine 4, cysteine 6, cysteine 12, cysteine 14, cysteine 18, cysteine 20, cysteine 23, cysteine 25, cysteine 28, cysteine 32, cysteine 33, cysteine 35, cysteine 36, cysteine 40, cysteine 43, cysteine 47, cysteine 49, cysteine 54, cysteine 58, and cysteine 59 together coordinate a divalent metal cation. Residues 29–60 are alpha; the sequence is KKSCCPCCPSGCTKCASGCVCKGKTCDTSCCQ.

Belongs to the metallothionein superfamily. Type 1 family.

Its function is as follows. Metallothioneins have a high content of cysteine residues that bind various heavy metals. The chain is Metallothionein B (mtb) from Trematomus bernacchii (Emerald rockcod).